We begin with the raw amino-acid sequence, 120 residues long: MLKLKTQKVIDAIESKFIKKDLPTLKIGDNVRIGVKIIEGTKERVQFYEGTIIAKKNSSINMTITVRKILQGIGIERVFLVHSPKIDSITVLRSSKVRRAKLYYLRNLRGKASRLKQTFK.

This sequence belongs to the bacterial ribosomal protein bL19 family.

The protein resides in the plastid. It localises to the chloroplast. In Phaeodactylum tricornutum (strain CCAP 1055/1), this protein is Large ribosomal subunit protein bL19c.